The chain runs to 278 residues: Orotidine 5'-phosphate decarboxylase (278 aa).

Substrate contacts are provided by residues aspartate 40, 62-64 (KTH), 93-102 (DRKFADIGNT), tyrosine 223, and arginine 242. Catalysis depends on lysine 95, which acts as the Proton donor.

The protein belongs to the OMP decarboxylase family.

It catalyses the reaction orotidine 5'-phosphate + H(+) = UMP + CO2. It participates in pyrimidine metabolism; UMP biosynthesis via de novo pathway; UMP from orotate: step 2/2. This Schizophyllum commune (Split gill fungus) protein is Orotidine 5'-phosphate decarboxylase (URA1).